Consider the following 299-residue polypeptide: Taste receptor type 2 member 50 (299 aa).

Position 1 (methionine 1) is a topological domain, extracellular. Residues 2 to 22 (ITFLYIFFSILIMVLFVLGNF) form a helical membrane-spanning segment. Residues 23–55 (ANGFIALVNFIDWVKRKKISSADQILTALAVSR) are Cytoplasmic-facing. The chain crosses the membrane as a helical span at residues 56-76 (IGLLWTLLLNWYLTVLNPAFY). Residues 77–87 (SVELRITSYNA) lie on the Extracellular side of the membrane. Residues 88-108 (WVVTNHFSMWLAASLSIFYLL) traverse the membrane as a helical segment. The Cytoplasmic segment spans residues 109-126 (KIANFSNLIFLHLKRRVR). Residues 127 to 147 (SVILVILLGTLIFLVCHLLVA) traverse the membrane as a helical segment. At 148–181 (NMDESMWAEEYEGNITGKMKLRNTVHLSYLTVTT) the chain is on the extracellular side. Asparagine 161 carries an N-linked (GlcNAc...) asparagine glycan. Residues 182 to 202 (LWSFIPFTLSLISFLMLICSL) form a helical membrane-spanning segment. The Cytoplasmic segment spans residues 203–229 (CKHLKKMQLHGEGSQDLSTKVHIKALQ). Residues 230–250 (TLISFLLLCAIFFLFLIISVW) traverse the membrane as a helical segment. Residues 251-259 (SPRRLRNDP) are Extracellular-facing. The chain crosses the membrane as a helical span at residues 260-280 (VVMVSKAVGNIYLAFDSFILI). Residues 281–299 (WRTKKLKHTFLLILCQIRC) are Cytoplasmic-facing.

Belongs to the G-protein coupled receptor T2R family.

The protein resides in the membrane. Its function is as follows. Receptor that may play a role in the perception of bitterness and is gustducin-linked. May play a role in sensing the chemical composition of the gastrointestinal content. The activity of this receptor may stimulate alpha gustducin, mediate PLC-beta-2 activation and lead to the gating of TRPM5. This Pan paniscus (Pygmy chimpanzee) protein is Taste receptor type 2 member 50 (TAS2R50).